A 178-amino-acid polypeptide reads, in one-letter code: Large ribosomal subunit protein uL6 (178 aa).

This sequence belongs to the universal ribosomal protein uL6 family. Part of the 50S ribosomal subunit.

This protein binds to the 23S rRNA, and is important in its secondary structure. It is located near the subunit interface in the base of the L7/L12 stalk, and near the tRNA binding site of the peptidyltransferase center. This Helicobacter pylori (strain J99 / ATCC 700824) (Campylobacter pylori J99) protein is Large ribosomal subunit protein uL6.